The sequence spans 435 residues: Tumor necrosis factor receptor superfamily member 3 (435 aa).

Residues 1-30 form the signal peptide; it reads MLLPWATSAPGLAWGPLVLGLFGLLAASQP. The Extracellular portion of the chain corresponds to 31–227; it reads QAVPPYASEN…PPEMSGTMLM (197 aa). N40 carries an N-linked (GlcNAc...) asparagine glycan. TNFR-Cys repeat units lie at residues 42-81, 82-124, 125-168, and 169-211; these read TCRD…TVCA, TCAE…KTQC, RCQP…NHCV, and PCKA…TTCK. 10 disulfides stabilise this stretch: C43–C58, C59–C72, C62–C80, C83–C98, C101–C116, C104–C124, C126–C132, C139–C148, C142–C167, and C170–C185. An N-linked (GlcNAc...) asparagine glycan is attached at N177. The chain crosses the membrane as a helical span at residues 228 to 248; that stretch reads LAVLLPLAFFLLLATVFSCIW. The Cytoplasmic portion of the chain corresponds to 249 to 435; the sequence is KSHPSLCRKL…GPRNQFITHD (187 aa). Residue S323 is modified to Phosphoserine. Pro residues predominate over residues 373–399; that stretch reads PGPGDLPATPEPPYPIPEEGDPGPPGL. Residues 373-435 are disordered; sequence PGPGDLPATP…GPRNQFITHD (63 aa). The span at 403-417 shows a compositional bias: basic and acidic residues; the sequence is HQEDGKAWHLAETEH. Over residues 421 to 435 the composition is skewed to polar residues; sequence TPSNRGPRNQFITHD.

Self-associates; dimerization and trimerization are promoted by lymphotoxin (LTA(1)-LTB(2)). Associates with TRAF3. Associates with TRAF4. Associates with TRAF5. Interacts with Aedes aegypti lymphotoxin beta receptor inhibitor; the interaction reduces dimerization and trimerization of LTBR induced by lymphotoxin (LTA(1)-LTB(2)). In terms of assembly, (Microbial infection) Interacts with HCV core protein.

It is found in the membrane. In terms of biological role, receptor for the heterotrimeric lymphotoxin containing LTA and LTB, and for TNFS14/LIGHT. Activates NF-kappa-B signaling pathway upon stimulation with lymphotoxin (LTA(1)-LTB(2)). Promotes apoptosis via TRAF3 and TRAF5. May play a role in the development of lymphoid organs. The protein is Tumor necrosis factor receptor superfamily member 3 (LTBR) of Homo sapiens (Human).